We begin with the raw amino-acid sequence, 450 residues long: Glutamate--tRNA ligase 1 (450 aa).

The short motif at 7 to 17 (PSPTGYMHVGN) is the 'HIGH' region element. The short motif at 236 to 240 (KISKR) is the 'KMSKS' region element. Residue Lys-239 coordinates ATP.

The protein belongs to the class-I aminoacyl-tRNA synthetase family. Glutamate--tRNA ligase type 1 subfamily. Monomer.

Its subcellular location is the cytoplasm. It carries out the reaction tRNA(Glu) + L-glutamate + ATP = L-glutamyl-tRNA(Glu) + AMP + diphosphate. In terms of biological role, catalyzes the attachment of glutamate to tRNA(Glu) in a two-step reaction: glutamate is first activated by ATP to form Glu-AMP and then transferred to the acceptor end of tRNA(Glu). The sequence is that of Glutamate--tRNA ligase 1 from Anaplasma phagocytophilum (strain HZ).